A 741-amino-acid chain; its full sequence is NAD(P)H-quinone oxidoreductase subunit 5, chloroplastic (741 aa).

The next 15 membrane-spanning stretches (helical) occupy residues 9-29 (WIIP…LLLF), 40-60 (WAVP…ELAI), 89-109 (IDPL…LVLI), 125-145 (FSYL…SNLI), 147-167 (IYIF…FWFA), 185-205 (GDFG…SFEF), 219-239 (NGVN…GAVA), 258-278 (TPIS…FLVA), 280-300 (LLPL…IGVI), 327-347 (LGYI…FHLI), 396-416 (TTFF…CFWS), 425-445 (WLYS…TAFY), 547-567 (LLPL…GIPF), 606-626 (ILSV…YGSV), and 721-741 (SYIF…YFFI).

This sequence belongs to the complex I subunit 5 family. In terms of assembly, NDH is composed of at least 16 different subunits, 5 of which are encoded in the nucleus.

The protein resides in the plastid. It is found in the chloroplast thylakoid membrane. The enzyme catalyses a plastoquinone + NADH + (n+1) H(+)(in) = a plastoquinol + NAD(+) + n H(+)(out). It catalyses the reaction a plastoquinone + NADPH + (n+1) H(+)(in) = a plastoquinol + NADP(+) + n H(+)(out). Its function is as follows. NDH shuttles electrons from NAD(P)H:plastoquinone, via FMN and iron-sulfur (Fe-S) centers, to quinones in the photosynthetic chain and possibly in a chloroplast respiratory chain. The immediate electron acceptor for the enzyme in this species is believed to be plastoquinone. Couples the redox reaction to proton translocation, and thus conserves the redox energy in a proton gradient. The chain is NAD(P)H-quinone oxidoreductase subunit 5, chloroplastic (ndhF) from Ceratophyllum demersum (Rigid hornwort).